We begin with the raw amino-acid sequence, 209 residues long: Uracil phosphoribosyltransferase (209 aa).

Residues Arg-79, Arg-104, and Asp-131–Ser-139 each bind 5-phospho-alpha-D-ribose 1-diphosphate. Uracil contacts are provided by residues Ile-194 and Gly-199–Ala-201. Asp-200 lines the 5-phospho-alpha-D-ribose 1-diphosphate pocket.

Belongs to the UPRTase family. It depends on Mg(2+) as a cofactor.

The enzyme catalyses UMP + diphosphate = 5-phospho-alpha-D-ribose 1-diphosphate + uracil. It functions in the pathway pyrimidine metabolism; UMP biosynthesis via salvage pathway; UMP from uracil: step 1/1. With respect to regulation, allosterically activated by GTP. In terms of biological role, catalyzes the conversion of uracil and 5-phospho-alpha-D-ribose 1-diphosphate (PRPP) to UMP and diphosphate. The chain is Uracil phosphoribosyltransferase from Geobacter sulfurreducens (strain ATCC 51573 / DSM 12127 / PCA).